We begin with the raw amino-acid sequence, 296 residues long: dTDP-rhamnosyl transferase RfbF (296 aa).

This sequence belongs to the glycosyltransferase 2 family.

It participates in bacterial outer membrane biogenesis; lipopolysaccharide biosynthesis. The chain is dTDP-rhamnosyl transferase RfbF (rfbF) from Shigella flexneri.